A 178-amino-acid chain; its full sequence is Hypoxanthine phosphoribosyltransferase (178 aa).

Residues R43 and G44 each coordinate diphosphate. E99 provides a ligand contact to GMP. Residue E99 coordinates IMP. Mg(2+) contacts are provided by E99 and D100. The Proton acceptor role is filled by D103. Residues 103-108 (DSGNTL), K131, and D159 each bind GMP. IMP is bound by residues 103-108 (DSGNTL) and K131. R165 is a binding site for diphosphate.

The protein belongs to the purine/pyrimidine phosphoribosyltransferase family. As to quaternary structure, homotetramer. Mg(2+) is required as a cofactor.

Its subcellular location is the cytoplasm. The enzyme catalyses IMP + diphosphate = hypoxanthine + 5-phospho-alpha-D-ribose 1-diphosphate. The catalysed reaction is GMP + diphosphate = guanine + 5-phospho-alpha-D-ribose 1-diphosphate. The protein operates within purine metabolism; IMP biosynthesis via salvage pathway; IMP from hypoxanthine: step 1/1. Its function is as follows. Purine salvage pathway enzyme which catalyzes the transfer of the ribosyl-5-phosphate group from 5-phospho-alpha-D-ribose 1-diphosphate (PRPP) to the N9 position of hypoxanthine to yield IMP (inosine 5'-monophosphate). To a lesser extent, can also act on guanine leading to GMP, but shows a highly less efficient activity with xanthine. The polypeptide is Hypoxanthine phosphoribosyltransferase (hpt) (Shigella flexneri).